Here is a 292-residue protein sequence, read N- to C-terminus: RNA 5'-monophosphate methyltransferase (292 aa).

Residues 1–21 form a disordered region; it reads MAVPTELDGGSVKETAAEEES. S-adenosyl-L-methionine is bound by residues Arg46, Asn76, Asp110, 135-136, and Met164; that span reads DF. Residues 53-274 form the Bin3-type SAM domain; the sequence is ELLRQLFPES…KQTIETHPIP (222 aa).

This sequence belongs to the methyltransferase superfamily. Interacts with DICER1; the interaction may be mediated by RNA.

It localises to the cytoplasm. The enzyme catalyses a 5'-end 5'-phospho-ribonucleoside-RNA + S-adenosyl-L-methionine = a 5'-end (5'-methylphospho)-ribonucleoside-RNA + S-adenosyl-L-homocysteine. It carries out the reaction a 5'-end 5'-phospho-ribonucleoside-RNA + 2 S-adenosyl-L-methionine = a 5'-end (5'-bismethylphospho)-ribonucleoside-RNA + 2 S-adenosyl-L-homocysteine. Functionally, O-methyltransferase that specifically monomethylates 5'-monophosphate of cytoplasmic histidyl tRNA (tRNA(His)), acting as a capping enzyme by protecting tRNA(His) from cleavage by DICER1. Also able, with less efficiently, to methylate the 5' monophosphate of a subset of pre-miRNAs, acting as a negative regulator of miRNA processing. The 5' monophosphate of pre-miRNAs is recognized by DICER1 and is required for pre-miRNAs processing: methylation at this position reduces the processing of pre-miRNAs by DICER1. Was also reported to mediate dimethylation of pre-miR-145; however dimethylation cannot be reproduced by another group which observes a monomethylation of pre-miR-145. This Homo sapiens (Human) protein is RNA 5'-monophosphate methyltransferase.